The following is a 346-amino-acid chain: Sensor protein kinase GraS (346 aa).

A run of 2 helical transmembrane segments spans residues Ile18–Phe38 and Leu43–Phe63. Residues Glu126–Asn332 form the Histidine kinase domain.

As to quaternary structure, interacts with GraX.

It is found in the cell membrane. The catalysed reaction is ATP + protein L-histidine = ADP + protein N-phospho-L-histidine.. In terms of biological role, member of the two-component regulatory system GraR/GraS involved in resistance against cationic antimicrobial peptides (CAMPs). Functions as a sensor protein kinase which phosphorylates GraR through the auxiliary protein GraX. In turn, GraR up-regulates many genes such as adhesins, exoproteins, transporters, toxins, and proteins involved in cell wall synthesis. Down-regulates the expression of many genes involved in RNA and amino acid synthesis or glycolysis. The sequence is that of Sensor protein kinase GraS (graS) from Staphylococcus aureus (strain MRSA252).